Here is a 423-residue protein sequence, read N- to C-terminus: 5-hydroxytryptamine receptor 1A (423 aa).

Topologically, residues methionine 1–isoleucine 38 are extracellular. N-linked (GlcNAc...) asparagine glycans are attached at residues asparagine 10, asparagine 11, and asparagine 24. A helical transmembrane segment spans residues threonine 39–alanine 59. Topologically, residues alanine 60 to tyrosine 73 are cytoplasmic. A helical transmembrane segment spans residues leucine 74–valine 98. Residues leucine 99–valine 107 are Extracellular-facing. The chain crosses the membrane as a helical span at residues threonine 108–leucine 132. Cysteines 109 and 187 form a disulfide. Serotonin is bound by residues aspartate 116 and cysteine 120. Positions aspartate 133 to tyrosine 135 match the DRY motif; important for ligand-induced conformation changes motif. Residues aspartate 133–arginine 152 lie on the Cytoplasmic side of the membrane. Residues alanine 153 to glycine 174 form a helical membrane-spanning segment. Residues tryptophan 175–histidine 193 lie on the Extracellular side of the membrane. A helical membrane pass occupies residues glycine 194–glycine 216. The Cytoplasmic portion of the chain corresponds to arginine 217 to threonine 346. The segment at arginine 235–threonine 277 is disordered. Positions 345, 346, and 352 each coordinate 1D-myo-inositol 4-phosphate. A helical transmembrane segment spans residues leucine 347 to phenylalanine 370. The Extracellular segment spans residues cysteine 371–proline 378. The chain crosses the membrane as a helical span at residues threonine 379–phenylalanine 403. The NPxxY motif; important for ligand-induced conformation changes and signaling motif lies at asparagine 396–tyrosine 400. Residues phenylalanine 403, asparagine 404, and lysine 405 each coordinate 1D-myo-inositol 4-phosphate. Topologically, residues asparagine 404 to arginine 423 are cytoplasmic.

It belongs to the G-protein coupled receptor 1 family. 5-hydroxytryptamine receptor subfamily. HTR1A sub-subfamily. Heterodimer; heterodimerizes with GPER1. Interacts with YIF1B. Interacts with GPR39 and GALR1.

Its subcellular location is the cell membrane. The protein localises to the cell projection. It localises to the dendrite. Its activity is regulated as follows. G-protein coupled receptor activity is regulated by lipids: phosphatidylinositol 4-phosphate increases HTR1A-mediated activity. G-protein coupled receptor for 5-hydroxytryptamine (serotonin). Also functions as a receptor for various drugs and psychoactive substances. Ligand binding causes a conformation change that triggers signaling via guanine nucleotide-binding proteins (G proteins) and modulates the activity of downstream effectors, such as adenylate cyclase. HTR1A is coupled to G(i)/G(o) G alpha proteins and mediates inhibitory neurotransmission: signaling inhibits adenylate cyclase activity and activates a phosphatidylinositol-calcium second messenger system that regulates the release of Ca(2+) ions from intracellular stores. Beta-arrestin family members regulate signaling by mediating both receptor desensitization and resensitization processes. This Canis lupus familiaris (Dog) protein is 5-hydroxytryptamine receptor 1A (HTR1A).